A 436-amino-acid polypeptide reads, in one-letter code: Drebrin-like protein (436 aa).

The 132-residue stretch at 2-133 folds into the ADF-H domain; sequence AVNLSRNGPA…EPECIMEKVA (132 aa). The residue at position 26 (Thr26) is a Phosphothreonine. Ser160 bears the Phosphoserine mark. Position 176 is an N6-acetyllysine (Lys176). Residues 179-233 are a coiled coil; that stretch reads FWAKAEKEEENRRLEEKRRAEEERQRLEEERRERELQEAARREQRYQEQHRSAGA. 2 stretches are compositionally biased toward basic and acidic residues: residues 185–229 and 264–275; these read KEEE…EQHR and HPREIFKQKERA. The segment at 185–341 is disordered; the sequence is KEEENRRLEE…AQTEEEPTYE (157 aa). The segment covering 276-286 has biased composition (polar residues); the sequence is MSTTSVTSSQP. Phosphoserine occurs at positions 277, 280, 283, and 291. The segment covering 294–303 has biased composition (polar residues); that stretch reads LQKQLTQPET. Lys296 is modified (N6-acetyllysine). At Thr299 the chain carries Phosphothreonine. Phosphotyrosine is present on residues Tyr340 and Tyr350. The SH3 domain occupies 377–436; that stretch reads GQGLCARALYDYQAADDTEISFDPENLITGIEVIDEGWWRGYGPDGHFGMFPANYVELIE.

This sequence belongs to the ABP1 family. Interacts with SHANK3, SYN1 and PRAM1. Interacts with SHANK2. Interacts with FGD1, DNM1 and MAP4K1. Interacts with ANKRD54. Interacts with COBL. Interacts with WASL and WIPF1. As to expression, detected in hippocampus neurons and in the Purkinje cell layer in cerebellum (at protein level). Predominantly expressed in brain, thymus and spleen. Also found in testis, heart and lung. Little or no expression detected in ovary or muscle.

It localises to the cytoplasm. The protein localises to the cytoskeleton. The protein resides in the cell projection. Its subcellular location is the lamellipodium. It is found in the ruffle. It localises to the cell cortex. The protein localises to the cytosol. The protein resides in the synapse. Its subcellular location is the perikaryon. It is found in the neuron projection. It localises to the cell membrane. The protein localises to the cytoplasmic vesicle. The protein resides in the clathrin-coated vesicle membrane. Its subcellular location is the golgi apparatus membrane. It is found in the podosome. It localises to the early endosome. The protein localises to the dendrite. The protein resides in the postsynaptic density. Its function is as follows. Adapter protein that binds F-actin and DNM1, and thereby plays a role in receptor-mediated endocytosis. Plays a role in the reorganization of the actin cytoskeleton, formation of cell projections, such as neurites, in neuron morphogenesis and synapse formation via its interaction with WASL and COBL. Does not bind G-actin and promote actin polymerization by itself. Required for the formation of organized podosome rosettes. May act as a common effector of antigen receptor-signaling pathways in leukocytes. Acts as a key component of the immunological synapse that regulates T-cell activation by bridging TCRs and the actin cytoskeleton to gene activation and endocytic processes. This chain is Drebrin-like protein, found in Mus musculus (Mouse).